A 623-amino-acid chain; its full sequence is tRNA 5-methylaminomethyl-2-thiouridine biosynthesis bifunctional protein MnmC (623 aa).

The tract at residues 1–244 is tRNA (mnm(5)s(2)U34)-methyltransferase; the sequence is MCVSSSIQTA…KREMLKAIWP (244 aa). The FAD-dependent cmnm(5)s(2)U34 oxidoreductase stretch occupies residues 268–623; sequence IGAGIAGLHC…VKIKKPYYSS (356 aa).

The protein in the N-terminal section; belongs to the methyltransferase superfamily. tRNA (mnm(5)s(2)U34)-methyltransferase family. It in the C-terminal section; belongs to the DAO family. Requires FAD as cofactor.

The protein resides in the cytoplasm. The catalysed reaction is 5-aminomethyl-2-thiouridine(34) in tRNA + S-adenosyl-L-methionine = 5-methylaminomethyl-2-thiouridine(34) in tRNA + S-adenosyl-L-homocysteine + H(+). Functionally, catalyzes the last two steps in the biosynthesis of 5-methylaminomethyl-2-thiouridine (mnm(5)s(2)U) at the wobble position (U34) in tRNA. Catalyzes the FAD-dependent demodification of cmnm(5)s(2)U34 to nm(5)s(2)U34, followed by the transfer of a methyl group from S-adenosyl-L-methionine to nm(5)s(2)U34, to form mnm(5)s(2)U34. The chain is tRNA 5-methylaminomethyl-2-thiouridine biosynthesis bifunctional protein MnmC from Acinetobacter baylyi (strain ATCC 33305 / BD413 / ADP1).